The sequence spans 204 residues: Nicotine blue oxidoreductase (204 aa).

As to quaternary structure, homotetramer. FMN is required as a cofactor.

The catalysed reaction is 3,3'-bipyridine-2,2',5,5',6,6'-hexol + NADP(+) = (E)-2,2',5,5'-tetrahydroxy-6H,6'H-(3,3'-bipyridinylidene)-6,6'-dione + NADPH + 3 H(+). It catalyses the reaction 3,3'-bipyridine-2,2',5,5',6,6'-hexol + NAD(+) = (E)-2,2',5,5'-tetrahydroxy-6H,6'H-(3,3'-bipyridinylidene)-6,6'-dione + NADH + 3 H(+). It participates in alkaloid degradation; nicotine degradation. In terms of biological role, catalyzes the reduction of nicotine blue to its hydroquinone form. Nicotine blue is the name given to the compound formed by the autocatalytic condensation of two molecules of 2,3,6-trihydroxypyridine, an intermediate in the nicotine degradation pathway. May play a role in preventing the intracellular formation of nicotine blue semiquinone radicals, which by redox cycling would lead to the formation of toxic reactive oxygen species. Besides nicotine blue, several other quinones are reduced by nboR. In Paenarthrobacter nicotinovorans (Arthrobacter nicotinovorans), this protein is Nicotine blue oxidoreductase (nboR).